The following is a 503-amino-acid chain: Excitatory amino acid transporter (503 aa).

Residues 1–18 (MPPDTRINKEIMVSWIRK) lie on the Cytoplasmic side of the membrane. 3 helical membrane-spanning segments follow: residues 19–39 (NLLLVLTVSSVVLGALCGFLL), 59–79 (LMHMLKMMILPLIMSSLISGL), and 96–116 (TYYMFTTAVAVVTGIFLVLVI). Residues 117-198 (HPGDPTIKKE…SLDYVKASVE (82 aa)) lie on the Extracellular side of the membrane. 2 N-linked (GlcNAc...) asparagine glycosylation sites follow: N177 and N187. Helical transmembrane passes span 199 to 219 (YTSGMNVLGVIVFCIAIGISL), 239 to 259 (VIMKLVMTVMWYSPFGIFCLI), 281 to 301 (VTVLSGLAIHSLISLPLIFFV), 369 to 389 (AVAAIFIAQINGVHLSFGQVV), and 400 to 420 (IGAASVPSAGLVTMLLVLTAV).

This sequence belongs to the dicarboxylate/amino acid:cation symporter (DAACS) (TC 2.A.23) family.

It is found in the membrane. Transports L-glutamate and also L- and D-aspartate. Essential for terminating the postsynaptic action of glutamate by rapidly removing released glutamate from the synaptic cleft. Acts as a symport by cotransporting sodium. The polypeptide is Excitatory amino acid transporter (glt-1) (Caenorhabditis elegans).